A 121-amino-acid chain; its full sequence is Immunoglobulin kappa variable 2-40 (121 aa).

Positions 1–19 are cleaved as a signal peptide; that stretch reads MRLPAQLLGLLMLWVPGSS. Residues 20–121 enclose the Ig-like domain; sequence EDIVMTQTPL…YYCMQRIEFP (102 aa). The tract at residues 21-43 is framework-1; the sequence is DIVMTQTPLSLPVTPGEPASISC. C43 and C114 are oxidised to a cystine. Residues 44 to 60 are complementarity-determining-1; sequence RSSQSLLDSDDGNTYLD. The segment at 61 to 75 is framework-2; sequence WYLQKPGQSPQLLIY. The interval 76 to 82 is complementarity-determining-2; sequence TLSYRAS. Residues 83-114 are framework-3; sequence GVPDRFSGSGSGTDFTLKISRVEAEDVGVYYC. Positions 115-121 are complementarity-determining-3; sequence MQRIEFP.

In terms of assembly, immunoglobulins are composed of two identical heavy chains and two identical light chains; disulfide-linked.

It localises to the secreted. The protein localises to the cell membrane. In terms of biological role, v region of the variable domain of immunoglobulin light chains that participates in the antigen recognition. Immunoglobulins, also known as antibodies, are membrane-bound or secreted glycoproteins produced by B lymphocytes. In the recognition phase of humoral immunity, the membrane-bound immunoglobulins serve as receptors which, upon binding of a specific antigen, trigger the clonal expansion and differentiation of B lymphocytes into immunoglobulins-secreting plasma cells. Secreted immunoglobulins mediate the effector phase of humoral immunity, which results in the elimination of bound antigens. The antigen binding site is formed by the variable domain of one heavy chain, together with that of its associated light chain. Thus, each immunoglobulin has two antigen binding sites with remarkable affinity for a particular antigen. The variable domains are assembled by a process called V-(D)-J rearrangement and can then be subjected to somatic hypermutations which, after exposure to antigen and selection, allow affinity maturation for a particular antigen. The chain is Immunoglobulin kappa variable 2-40 from Homo sapiens (Human).